The sequence spans 142 residues: Large ribosomal subunit protein uL16 (142 aa).

The protein belongs to the universal ribosomal protein uL16 family. As to quaternary structure, part of the 50S ribosomal subunit.

In terms of biological role, binds 23S rRNA and is also seen to make contacts with the A and possibly P site tRNAs. The protein is Large ribosomal subunit protein uL16 of Gemmatimonas aurantiaca (strain DSM 14586 / JCM 11422 / NBRC 100505 / T-27).